Reading from the N-terminus, the 765-residue chain is Myotubularin-related protein 10-A (765 aa).

Residues 209–650 (FETYSDWDRE…THIKLWKLCY (442 aa)) form the Myotubularin phosphatase domain.

This sequence belongs to the protein-tyrosine phosphatase family. Non-receptor class myotubularin subfamily.

The sequence is that of Myotubularin-related protein 10-A (mtmr10-a) from Xenopus laevis (African clawed frog).